A 571-amino-acid chain; its full sequence is Ferroportin (571 aa).

Over Met-1–Ser-23 the chain is Cytoplasmic. Residues Ala-24–Leu-53 form a helical membrane-spanning segment. Fe cation is bound by residues Asp-39 and His-43. The Extracellular segment spans residues Tyr-54–Ser-57. The helical transmembrane segment at Leu-58–Asp-84 threads the bilayer. At Lys-85–Ala-87 the chain is on the cytoplasmic side. Residues Arg-88–His-118 traverse the membrane as a helical segment. Topologically, residues Glu-119 to Gly-126 are extracellular. Residues Trp-127 to Val-162 form a helical membrane-spanning segment. Residues Ala-163–Gly-164 are Cytoplasmic-facing. The helical transmembrane segment at Glu-165 to Ile-195 threads the bilayer. Residues Met-196–Val-202 lie on the Extracellular side of the membrane. Residues Ile-203–Lys-229 traverse the membrane as a helical segment. The Cytoplasmic segment spans residues Thr-230–Pro-306. A helical transmembrane segment spans residues Val-307–Tyr-333. Cys-326 lines the Fe cation pocket. Topologically, residues Thr-334 to Ser-338 are extracellular. The helical transmembrane segment at Gly-339–Lys-366 threads the bilayer. At Cys-367–Gly-368 the chain is on the cytoplasmic side. Residues Leu-369–Val-391 form a helical membrane-spanning segment. Residues Phe-392–Ile-453 lie on the Extracellular side of the membrane. Asn-434 is a glycosylation site (N-linked (GlcNAc...) asparagine). Residues Ser-454–Asn-483 form a helical membrane-spanning segment. At Val-484–Glu-488 the chain is on the cytoplasmic side. A helical transmembrane segment spans residues Arg-489–Leu-513. His-507 contributes to the Fe cation binding site. Over Ala-514–Asn-516 the chain is Extracellular. The helical transmembrane segment at Pro-517–Ala-542 threads the bilayer. The Cytoplasmic segment spans residues Gln-543–Val-571.

Belongs to the ferroportin (FP) (TC 2.A.100) family. SLC40A subfamily. As to quaternary structure, identified in a complex with STOM. Interacts with HAMP; affinity of the peptide hormone HAMP for SLC40A1 increases by 80-fold in the presence of iron and the interaction promotes SLC40A1 ubiquitination and degradation. Part of a complex composed of SLC40A1/ferroportin, TF/transferrin and HEPH/hephaestin that transfers iron from cells to transferrin. Post-translationally, polyubiquitinated by RNF217; leading to proteasomal degradation. Under conditions of high systemic iron levels, both the hormone peptide hepcidin/HAMP and holo(iron bound)-transferrin/TF induce the ubiquitination, internalization and proteasomal degradation of SLC40A1 to control iron release from cells. Detected in erythrocytes (at protein level). Expressed in placenta, intestine, muscle and spleen. Highly expressed in mature red blood.

The protein resides in the cell membrane. Its subcellular location is the basolateral cell membrane. The catalysed reaction is Fe(2+)(in) = Fe(2+)(out). Functionally, transports Fe(2+) from the inside of a cell to the outside of the cell, playing a key role for maintaining systemic iron homeostasis. Transports iron from intestinal, splenic, hepatic cells, macrophages and erythrocytes into the blood to provide iron to other tissues. Controls therefore dietary iron uptake, iron recycling by macrophages and erythrocytes, and release of iron stores in hepatocytes. When iron is in excess in serum, circulating HAMP/hepcidin levels increase resulting in a degradation of SLC40A1, thus limiting the iron efflux to plasma. The polypeptide is Ferroportin (Homo sapiens (Human)).